An 80-amino-acid chain; its full sequence is Late cornified envelope protein 6A (80 aa).

The segment covering 1–10 has biased composition (polar residues); that stretch reads MSQQKQQSWK. Disordered stretches follow at residues 1-21 and 35-60; these read MSQQKQQSWKPPNVPKCSPPQ and GAPHSEGCHSSSQRPEVQKPRRARQK.

Belongs to the LCE family.

Functionally, precursors of the cornified envelope of the stratum corneum. In Homo sapiens (Human), this protein is Late cornified envelope protein 6A (LCE6A).